The sequence spans 224 residues: Probable mitochondrial import inner membrane translocase subunit Tim17 4 (224 aa).

The next 3 helical transmembrane spans lie at 16–36 (CGCA…LKGF), 60–80 (AIAG…CVMV), and 115–135 (AFVG…VATI).

It belongs to the Tim17/Tim22/Tim23 family. Component of the TIM23 complex at least composed of Tim23, Tim17 (Tim17a1, Tim17a2 or Tim17b1) and a Tim50. The complex interacts with the Tim44 component of the PAM complex.

Its subcellular location is the mitochondrion inner membrane. Its function is as follows. Essential component of the TIM23 complex, a complex that mediates the translocation of transit peptide-containing proteins across the mitochondrial inner membrane. The chain is Probable mitochondrial import inner membrane translocase subunit Tim17 4 (Tim17a2) from Drosophila melanogaster (Fruit fly).